The sequence spans 628 residues: U-box domain-containing protein 10 (628 aa).

One can recognise a U-box domain in the interval 242 to 316; the sequence is TIPEDFLCPI…SQWCTKHNIE (75 aa). ARM repeat units lie at residues 373–413, 415–454, 456–495, 497–537, and 539–578; these read TDNR…NLSI, EHNK…SLSL, DENK…NLCI, QGNK…VLAS, and QVAK…CLCK.

The catalysed reaction is S-ubiquitinyl-[E2 ubiquitin-conjugating enzyme]-L-cysteine + [acceptor protein]-L-lysine = [E2 ubiquitin-conjugating enzyme]-L-cysteine + N(6)-ubiquitinyl-[acceptor protein]-L-lysine.. Its pathway is protein modification; protein ubiquitination. In terms of biological role, functions as an E3 ubiquitin ligase. In Arabidopsis thaliana (Mouse-ear cress), this protein is U-box domain-containing protein 10 (PUB10).